Reading from the N-terminus, the 1384-residue chain is DNA-directed RNA polymerase subunit beta (1384 aa).

It belongs to the RNA polymerase beta chain family. The RNAP catalytic core consists of 2 alpha, 1 beta, 1 beta' and 1 omega subunit. When a sigma factor is associated with the core the holoenzyme is formed, which can initiate transcription.

It catalyses the reaction RNA(n) + a ribonucleoside 5'-triphosphate = RNA(n+1) + diphosphate. DNA-dependent RNA polymerase catalyzes the transcription of DNA into RNA using the four ribonucleoside triphosphates as substrates. The polypeptide is DNA-directed RNA polymerase subunit beta (Stenotrophomonas maltophilia (strain R551-3)).